The sequence spans 335 residues: DNA-directed RNA polymerases I and III subunit RPAC1 (335 aa).

Position 2 is an N-acetylserine (S2). S17 carries the post-translational modification Phosphoserine.

This sequence belongs to the archaeal Rpo3/eukaryotic RPB3 RNA polymerase subunit family. As to quaternary structure, component of the RNA polymerase I (Pol I) complex consisting of 14 subunits: RPA135, RPA190, RPC40, RPA14, RPB5, RPO26, RPA43, RPB8, RPA12, RPB10, RPC19, RPC10, RPA49 and RPA34. The complex is composed of a horseshoe-shaped core containing ten subunits (RPA135, RPA190, RPB5, RPO26, RPB8, RPB10, RPC10, RPA12, RPC19 and RPC40) where RPA135 and RPA190 form the DNA-binding cleft. Outside of the core, RPA14 and RPA43 form the stalk that mediates interactions with transcription initiation factors and newly synthesized RNA. Component of the RNA polymerase III (Pol III) complex consisting of at least 17 subunits. Interacts with the RPC19/RPAC2 and RPC53/RPC4. Interacts with retrotransposons Ty integrase, targeting Ty1, Ty2 and Ty4 integration upstream of pol III-transcribed genes.

The protein localises to the nucleus. The protein resides in the nucleolus. Its function is as follows. DNA-dependent RNA polymerases catalyze the transcription of DNA into RNA using the four ribonucleoside triphosphates as substrates. Common component of RNA polymerases I (Pol I) and III (Pol III) which synthesize ribosomal RNA precursors and small RNAs, such as 5S rRNA and tRNAs, respectively. RPC40 is part of the polymerase core and may function as a clamp element that moves to open and close the cleft. Plays an important role in targeting retrotransposons Ty integration upstream of pol III-transcribed genes such as tRNA genes, allowing Ty1, Ty2 and Ty4 to proliferate and yet minimizing genetic damage. The chain is DNA-directed RNA polymerases I and III subunit RPAC1 from Saccharomyces cerevisiae (strain ATCC 204508 / S288c) (Baker's yeast).